A 628-amino-acid chain; its full sequence is Leucine-rich repeat and fibronectin type-III domain-containing protein 3 (628 aa).

The N-terminal stretch at 1-16 (MAILPLLLCLLPLAPA) is a signal peptide. Over 17-539 (SSPPQSATPS…PHAPFLGGTM (523 aa)) the chain is Extracellular. The LRRNT domain occupies 19–59 (PPQSATPSPCPRRCRCQTQSLPLSVLCPGAGLLFVPPSLDR). LRR repeat units lie at residues 60–83 (RAAELRLADNFIASVRRRDLANMT), 84–105 (GLLHLSLSRNTIRHVAAGAFAD), 108–129 (ALRALHLDGNRLTSLGEGQLRG), 132–153 (NLRHLILSNNQLAALAAGALDD), 157–178 (TLEDLDLSYNNLEQLPWEALGR), 181–202 (NVNTLGLDHNLLASVPAGAFSR), and 205–226 (KLARLDMTSNRLTTIPPDPLFS). Residue Asn-81 is glycosylated (N-linked (GlcNAc...) asparagine). Residues 249–295 (NPLHCNCELVWLRRLAREDDLEACASPPALGGRYFWAVGEEEFVCEP) form the LRRCT domain. The Ig-like domain maps to 295 to 382 (PPVVTHRSPP…GEATAAVELT (88 aa)). A disulfide bridge links Cys-317 with Cys-366. N-linked (GlcNAc...) asparagine glycans are attached at residues Asn-339, Asn-348, and Asn-393. Residues 382–430 (TVGPPPPPQLANSTSCDPPRDGDPDALTPPSAASASAKVADTGPPTDRG) form a disordered region. A compositionally biased stretch (low complexity) spans 406–422 (DALTPPSAASASAKVAD). Residues 425 to 523 (PPTDRGVQVT…GCARFSTEPA (99 aa)) form the Fibronectin type-III domain. Residue Asn-462 is glycosylated (N-linked (GlcNAc...) asparagine). Residues 540–560 (IIALGGVIVASVLVFIFVLLM) form a helical membrane-spanning segment. Residues 561-628 (RYKVHGGQPP…WGPGHEPVGP (68 aa)) are Cytoplasmic-facing.

It belongs to the LRFN family. In terms of assembly, can form heteromeric complexes with LRFN1, LRFN2, LRFN4 and LRFN5. Able to form homomeric complexes across cell junctions, between adjacent cells. Does not interact with DLG4. N-glycosylated.

The protein resides in the cell membrane. It localises to the cell projection. Its subcellular location is the axon. It is found in the dendrite. The protein localises to the synapse. The protein resides in the presynaptic cell membrane. It localises to the postsynaptic cell membrane. In terms of biological role, cell adhesion molecule that mediates homophilic cell-cell adhesion in a Ca(2+)-independent manner. Promotes neurite outgrowth in hippocampal neurons. The polypeptide is Leucine-rich repeat and fibronectin type-III domain-containing protein 3 (LRFN3) (Homo sapiens (Human)).